Reading from the N-terminus, the 125-residue chain is Fluoride-specific ion channel FluC (125 aa).

Helical transmembrane passes span 5–25 (IFLV…VSLL), 33–53 (IFPL…GILV), 66–86 (VKIF…SFSL), and 100–120 (LVLY…LGYI). G76 and T79 together coordinate Na(+).

Belongs to the fluoride channel Fluc/FEX (TC 1.A.43) family.

The protein localises to the cell inner membrane. The catalysed reaction is fluoride(in) = fluoride(out). Na(+) is not transported, but it plays an essential structural role and its presence is essential for fluoride channel function. Fluoride-specific ion channel. Important for reducing fluoride concentration in the cell, thus reducing its toxicity. In Azobacteroides pseudotrichonymphae genomovar. CFP2, this protein is Fluoride-specific ion channel FluC.